The sequence spans 98 residues: UPF0473 protein lp_2273 (98 aa).

Belongs to the UPF0473 family.

In Lactiplantibacillus plantarum (strain ATCC BAA-793 / NCIMB 8826 / WCFS1) (Lactobacillus plantarum), this protein is UPF0473 protein lp_2273.